Consider the following 759-residue polypeptide: DNA topoisomerase 3 (759 aa).

Residues 3-147 enclose the Toprim domain; it reads RALFVAEKND…RLDIFRARFS (145 aa). In terms of domain architecture, Topo IA-type catalytic spans 165-590; sequence DEKTVAAVDC…EQIGKYRAIF (426 aa). The active-site O-(5'-phospho-DNA)-tyrosine intermediate is the Y334. Residues 609–715 form a disordered region; sequence DKNNQAGGGP…KEQEEEEEVF (107 aa). Over residues 614–639 the composition is skewed to gly residues; that stretch reads AGGGPGGPGGGGGPPRGPGGGGGGGP. The span at 640-649 shows a compositional bias: pro residues; that stretch reads TGPPAPPKPP. The Zn(2+) site is built by C716, C718, C743, and C753. The segment at 716–759 adopts a GRF-type zinc-finger fold; the sequence is CQCPEPMRAVTKVVQKEGPNKGKKFYTCSLPYTSSEKCNFFKWA.

Belongs to the type IA topoisomerase family. As to quaternary structure, component of the BTR double Holliday Junction dissolution complex composed of at least him-6, top-3, rmh-1 and rmif-2, which is involved in double strand break repair in the germline. May interact with rmh-1.

It localises to the nucleus. It catalyses the reaction ATP-independent breakage of single-stranded DNA, followed by passage and rejoining.. In terms of biological role, component of the BTR double Holliday Junction dissolution complex, which is involved in homologous recombination during meiotic double strand break in the germline. Releases the supercoiling and torsional tension of DNA introduced during the DNA replication and transcription by transiently cleaving and rejoining one strand of the DNA duplex. Introduces a single-strand break via transesterification at a target site in duplex DNA. The scissile phosphodiester is attacked by the catalytic tyrosine of the enzyme, resulting in the formation of a DNA-(5'-phosphotyrosyl)-enzyme intermediate and the expulsion of a 3'-OH DNA strand. The free DNA strand than undergoes passage around the unbroken strand thus removing DNA supercoils. Finally, in the religation step, the DNA 3'-OH attacks the covalent intermediate to expel the active-site tyrosine and restore the DNA phosphodiester backbone. The protein is DNA topoisomerase 3 of Caenorhabditis elegans.